A 306-amino-acid polypeptide reads, in one-letter code: Agmatinase (306 aa).

Mn(2+) contacts are provided by His126, Asp149, His151, Asp153, Asp230, and Asp232.

The protein belongs to the arginase family. Agmatinase subfamily. Requires Mn(2+) as cofactor.

The enzyme catalyses agmatine + H2O = urea + putrescine. It functions in the pathway amine and polyamine biosynthesis; putrescine biosynthesis via agmatine pathway; putrescine from agmatine: step 1/1. Its function is as follows. Catalyzes the formation of putrescine from agmatine. This chain is Agmatinase, found in Salmonella dublin (strain CT_02021853).